The sequence spans 114 residues: Cytochrome c oxidase subunit 7A2-like, mitochondrial (114 aa).

The N-terminal 55 residues, 1–55, are a transit peptide targeting the mitochondrion; the sequence is MYYKFSGFTQKLAGAWASDAYSPQGLRPVVSTEAPPIIFATPTKLSSGPTAYDYA. Lys69 carries the post-translational modification N6-acetyllysine. The helical transmembrane segment at 82-107 threads the bilayer; the sequence is PDQMLYRTTMALTVGGTIYCLIALYM.

The protein belongs to the cytochrome c oxidase VIIa family. Interacts with the mitochondrial respiratory complexes III (CIII) and IV (CIV), promoting their association.

The protein resides in the mitochondrion inner membrane. In terms of biological role, assembly factor that mediates the formation of some mitochondrial respiratory supercomplexes (respirasomes), thereby promoting oxidative phosphorylation and energy metabolism. Acts as a molecular adapter that associates with both mitochondrial respiratory complexes III (CIII) and IV (CIV), promoting their association. Mediates the formation of various mitochondrial respiratory supercomplexes, such as MCIII(2)IV(2), composed of two CIII and two CIV, and the CS-respirasome (MCI(1)III(2)IV(2)), composed of one CI, two CIII and two CIV. Not involved in the formation of the canonical respirasome (MCI(1)III(2)IV(1)), composed of one CI, two CIII and one CIV. The formation of different respirasomes is important for cell adaptation to oxygen conditions and prevent metabolic exhaustion: supercomplexes mediated by COX7A2L/SCAF1 are required to maintain oxidative phosphorylation upon low oxygen conditions and promote metabolic rewiring toward glycolysis. This chain is Cytochrome c oxidase subunit 7A2-like, mitochondrial, found in Bos taurus (Bovine).